A 447-amino-acid polypeptide reads, in one-letter code: Beclin-2 (447 aa).

Positions 169–228 (EALHAELCAELSSLEQEEARLTQELEDLDGHHARVAAELRAAQAESKELYKQHEQHRVEY) form a coiled coil. The segment at 186–256 (EARLTQELED…NQLTYALSQQ (71 aa)) is required for homodimer formation.

The protein belongs to the beclin family. Homodimer (via coiled-coil domain). Interacts (via coiled-coil domain) with ATG14 (via coiled-coil domain); this interaction is tighter than BECN2 self-association. Interacts with AMBRA1, UVRAG and PIK3C3/VPS34; these interactions are not disrupted by starvation. Does not interact with RUBCN. Interacts (via N-terminus) with GPRASP1/GASP1; the interaction is direct. In terms of tissue distribution, expressed in brain, skeletal muscle, placenta, thymus and uterus. Expressed at a lower level in liver, testis, stomach, and 17-day-old embryos.

The protein resides in the cytoplasm. In terms of biological role, involved in 2 distinct lysosomal degradation pathways: acts as a regulator of autophagy and as a regulator of G-protein coupled receptors turnover. Regulates degradation in lysosomes of a variety of G-protein coupled receptors via its interaction with GPRASP1/GASP1. The polypeptide is Beclin-2 (Mus musculus (Mouse)).